The sequence spans 121 residues: Basic phospholipase A2 homolog AppP2 (121 aa).

7 disulfide bridges follow: C26–C115, C28–C44, C43–C95, C49–C121, C50–C88, C57–C81, and C75–C86. The important for membrane-damaging activities in eukaryotes and bacteria; heparin-binding stretch occupies residues 105–117; it reads KKYKAYFKLKCKK.

The protein belongs to the phospholipase A2 family. Group II subfamily. K49 sub-subfamily. Monomer. Expressed by the venom gland.

It is found in the secreted. Functionally, snake venom phospholipase A2 (PLA2) that lacks enzymatic activity. Displays edema-inducing activities. Is myotoxic. A model of myotoxic mechanism has been proposed: an apo Lys49-PLA2 is activated by the entrance of a hydrophobic molecule (e.g. fatty acid) at the hydrophobic channel of the protein leading to a reorientation of a monomer. This reorientation causes a transition between 'inactive' to 'active' states, causing alignment of C-terminal and membrane-docking sites (MDoS) side-by-side and putting the membrane-disruption sites (MDiS) in the same plane, exposed to solvent and in a symmetric position for both monomers. The MDoS region stabilizes the toxin on membrane by the interaction of charged residues with phospholipid head groups. Subsequently, the MDiS region destabilizes the membrane with penetration of hydrophobic residues. This insertion causes a disorganization of the membrane, allowing an uncontrolled influx of ions (i.e. calcium and sodium), and eventually triggering irreversible intracellular alterations and cell death. In Agkistrodon piscivorus piscivorus (Eastern cottonmouth), this protein is Basic phospholipase A2 homolog AppP2.